The chain runs to 365 residues: Putative carbonic anhydrase-like protein 1 (365 aa).

Positions 1–25 (MRFECSHFPLFLIILTCHISPLKSS) are cleaved as a signal peptide. Residues 28–356 (YQWSYDSDVF…TNNRLVRTNI (329 aa)) enclose the Alpha-carbonic anhydrase domain. Residue Tyr-223 is part of the active site. Substrate contacts are provided by residues Thr-295 and 295 to 296 (TS).

The protein belongs to the alpha-carbonic anhydrase family.

The protein resides in the secreted. The sequence is that of Putative carbonic anhydrase-like protein 1 (cah-1) from Caenorhabditis elegans.